The sequence spans 81 residues: Putative defensin-like protein 148 (81 aa).

Positions 1 to 24 (MIKSFQLSFTVLIVFTVLILGVVG) are cleaved as a signal peptide. Disulfide bonds link C34–C80, C43–C63, C48–C74, and C52–C76.

It belongs to the DEFL family.

It localises to the secreted. The protein is Putative defensin-like protein 148 (LCR4) of Arabidopsis thaliana (Mouse-ear cress).